Here is a 200-residue protein sequence, read N- to C-terminus: Small ribosomal subunit protein uS4 (200 aa).

The interval 22 to 42 is disordered; it reads TGKELQKRPYPPGQHGPGQRR. Residues 92-152 enclose the S4 RNA-binding domain; that stretch reads SRLDNLVYRL…EKSRNLQVIK (61 aa).

It belongs to the universal ribosomal protein uS4 family. Part of the 30S ribosomal subunit. Contacts protein S5. The interaction surface between S4 and S5 is involved in control of translational fidelity.

Functionally, one of the primary rRNA binding proteins, it binds directly to 16S rRNA where it nucleates assembly of the body of the 30S subunit. In terms of biological role, with S5 and S12 plays an important role in translational accuracy. This is Small ribosomal subunit protein uS4 from Geobacillus kaustophilus (strain HTA426).